The following is a 556-amino-acid chain: Glucose-6-phosphate isomerase (556 aa).

Catalysis depends on Glu-360, which acts as the Proton donor. Active-site residues include His-391 and Lys-519.

This sequence belongs to the GPI family.

Its subcellular location is the cytoplasm. The enzyme catalyses alpha-D-glucose 6-phosphate = beta-D-fructose 6-phosphate. The protein operates within carbohydrate biosynthesis; gluconeogenesis. Its pathway is carbohydrate degradation; glycolysis; D-glyceraldehyde 3-phosphate and glycerone phosphate from D-glucose: step 2/4. Functionally, catalyzes the reversible isomerization of glucose-6-phosphate to fructose-6-phosphate. The sequence is that of Glucose-6-phosphate isomerase from Acinetobacter baumannii (strain SDF).